An 83-amino-acid polypeptide reads, in one-letter code: Small ribosomal subunit protein eS27 (83 aa).

The segment at 37 to 59 (CPGCFNITTVFSHAQTVVICGSC) adopts a C4-type zinc-finger fold.

It belongs to the eukaryotic ribosomal protein eS27 family. In terms of assembly, component of the small ribosomal subunit (SSU). Mature yeast ribosomes consist of a small (40S) and a large (60S) subunit. The 40S small subunit contains 1 molecule of ribosomal RNA (18S rRNA) and at least 33 different proteins. The large 60S subunit contains 3 rRNA molecules (25S, 5.8S and 5S rRNA) and at least 46 different proteins. Zn(2+) serves as cofactor.

It is found in the cytoplasm. Component of the ribosome, a large ribonucleoprotein complex responsible for the synthesis of proteins in the cell. The small ribosomal subunit (SSU) binds messenger RNAs (mRNAs) and translates the encoded message by selecting cognate aminoacyl-transfer RNA (tRNA) molecules. The large subunit (LSU) contains the ribosomal catalytic site termed the peptidyl transferase center (PTC), which catalyzes the formation of peptide bonds, thereby polymerizing the amino acids delivered by tRNAs into a polypeptide chain. The nascent polypeptides leave the ribosome through a tunnel in the LSU and interact with protein factors that function in enzymatic processing, targeting, and the membrane insertion of nascent chains at the exit of the ribosomal tunnel. The sequence is that of Small ribosomal subunit protein eS27 (rps27) from Schizosaccharomyces pombe (strain 972 / ATCC 24843) (Fission yeast).